Here is a 108-residue protein sequence, read N- to C-terminus: Replication initiation control protein YabA (108 aa).

Residues histidine 82, cysteine 84, cysteine 98, and cysteine 101 each coordinate Zn(2+).

It belongs to the YabA family. As to quaternary structure, homotetramer. Interacts with both DnaA and DnaN, acting as a bridge between these two proteins. It depends on Zn(2+) as a cofactor.

It is found in the cytoplasm. The protein localises to the nucleoid. Its function is as follows. Involved in control of chromosome replication initiation. Inhibits the cooperative binding of DnaA to the oriC region, thus negatively regulating initiation of chromosome replication. Inhibits the ability of DnaA-ATP to form a helix on DNA; does not disassemble preformed DnaA-DNA helices. Decreases the residence time of DnaA on the chromosome at its binding sites (oriC, replication forks and promoter-binding sites). Tethers DnaA to the replication machinery via the DNA polymerase beta sliding clamp subunit (dnaN). Associates with oriC and other DnaA targets on the chromosome in a DnaA-dependent manner. In Streptococcus agalactiae serotype Ia (strain ATCC 27591 / A909 / CDC SS700), this protein is Replication initiation control protein YabA.